The following is a 1091-amino-acid chain: MPPNIYRLSFFSSLLCFFFIPCFSLDQQGQALLSWKSQLNISGDAFSSWHVADTSPCNWVGVKCNRRGEVSEIQLKGMDLQGSLPVTSLRSLKSLTSLTLSSLNLTGVIPKEIGDFTELELLDLSDNSLSGDIPVEIFRLKKLKTLSLNTNNLEGHIPMEIGNLSGLVELMLFDNKLSGEIPRSIGELKNLQVLRAGGNKNLRGELPWEIGNCENLVMLGLAETSLSGKLPASIGNLKRVQTIAIYTSLLSGPIPDEIGYCTELQNLYLYQNSISGSIPTTIGGLKKLQSLLLWQNNLVGKIPTELGNCPELWLIDFSENLLTGTIPRSFGKLENLQELQLSVNQISGTIPEELTNCTKLTHLEIDNNLITGEIPSLMSNLRSLTMFFAWQNKLTGNIPQSLSQCRELQAIDLSYNSLSGSIPKEIFGLRNLTKLLLLSNDLSGFIPPDIGNCTNLYRLRLNGNRLAGSIPSEIGNLKNLNFVDISENRLVGSIPPAISGCESLEFLDLHTNSLSGSLLGTTLPKSLKFIDFSDNALSSTLPPGIGLLTELTKLNLAKNRLSGEIPREISTCRSLQLLNLGENDFSGEIPDELGQIPSLAISLNLSCNRFVGEIPSRFSDLKNLGVLDVSHNQLTGNLNVLTDLQNLVSLNISYNDFSGDLPNTPFFRRLPLSDLASNRGLYISNAISTRPDPTTRNSSVVRLTILILVVVTAVLVLMAVYTLVRARAAGKQLLGEEIDSWEVTLYQKLDFSIDDIVKNLTSANVIGTGSSGVVYRITIPSGESLAVKKMWSKEESGAFNSEIKTLGSIRHRNIVRLLGWCSNRNLKLLFYDYLPNGSLSSRLHGAGKGGCVDWEARYDVVLGVAHALAYLHHDCLPTIIHGDVKAMNVLLGPHFEPYLADFGLARTISGYPNTGIDLAKPTNRPPMAGSYGYMAPEHASMQRITEKSDVYSYGVVLLEVLTGKHPLDPDLPGGAHLVKWVRDHLAEKKDPSRLLDPRLDGRTDSIMHEMLQTLAVAFLCVSNKANERPLMKDVVAMLTEIRHIDVGRSETEKIKAGGCGSKEPQQFMSNEKIINSHGSSNCSFAFSDDSV.

The N-terminal stretch at 1–24 is a signal peptide; sequence MPPNIYRLSFFSSLLCFFFIPCFS. Topologically, residues 25–703 are extracellular; that stretch reads LDQQGQALLS…TTRNSSVVRL (679 aa). The stretch at 33–56 is one LRR 1 repeat; the sequence is LSWKSQLNISGDAFSSWHVADTSP. Asn40 carries N-linked (GlcNAc...) asparagine glycosylation. Cys57 and Cys64 are disulfide-bonded. 26 LRR repeats span residues 67-91, 92-115, 116-140, 142-166, 168-188, 190-213, 214-237, 239-261, 262-285, 287-309, 311-332, 333-357, 359-383, 385-405, 406-429, 431-453, 454-477, 478-501, 503-524, 525-548, 549-572, 574-596, 598-620, 621-644, 645-668, and 669-690; these read RGEVSEIQLKGMDLQGSLPVTSLRS, LKSLTSLTLSSLNLTGVIPKEIGD, FTELELLDLSDNSLSGDIPVEIFRL, KLKTLSLNTNNLEGHIPMEIGNLSG, VELMLFDNKLSGEIPRSIGEL, NLQVLRAGGNKNLRGELPWEIGNC, ENLVMLGLAETSLSGKLPASIGNL, RVQTIAIYTSLLSGPIPDEIGYC, TELQNLYLYQNSISGSIPTTIGGL, KLQSLLLWQNNLVGKIPTELGNC, ELWLIDFSENLLTGTIPRSFGK, LENLQELQLSVNQISGTIPEELTNC, KLTHLEIDNNLITGEIPSLMSNLRS, TMFFAWQNKLTGNIPQSLSQC, RELQAIDLSYNSLSGSIPKEIFGL, NLTKLLLLSNDLSGFIPPDIGNC, TNLYRLRLNGNRLAGSIPSEIGNL, KNLNFVDISENRLVGSIPPAISGC, SLEFLDLHTNSLSGSLLGTTLP, KSLKFIDFSDNALSSTLPPGIGLL, TELTKLNLAKNRLSGEIPREISTC, SLQLLNLGENDFSGEIPDELGQI, SLAISLNLSCNRFVGEIPSRFSD, LKNLGVLDVSHNQLTGNLNVLTDL, QNLVSLNISYNDFSGDLPNTPFFR, and RLPLSDLASNRGLYISNAISTR. Residue Asn104 is glycosylated (N-linked (GlcNAc...) asparagine). The N-linked (GlcNAc...) asparagine glycan is linked to Asn163. 5 short sequence motifs (small peptide recognition) span residues 173–174, 195–198, 218–223, Tyr246, and 268–270; these read FD, RAGG, MLGLAE, and YLY. 2 consecutive short sequence motifs (small peptide recognition) follow at residues 316–319 and 338–340; these read DFSE and ELQ. Asn356 is a glycosylation site (N-linked (GlcNAc...) asparagine). Short sequence motifs (small peptide recognition) lie at residues 386–390 and 412–415; these read MFFAW and DLSY. N-linked (GlcNAc...) asparagine glycosylation is present at Asn431. Residues 434-438 carry the Small peptide recognition motif; the sequence is KLLLL. N-linked (GlcNAc...) asparagine glycosylation is present at Asn452. The Small peptide recognition signature appears at 458 to 460; that stretch reads RLR. An N-linked (GlcNAc...) asparagine glycan is attached at Asn604. The N-linked (GlcNAc...) asparagine glycan is linked to Asn651. Asn697 carries N-linked (GlcNAc...) asparagine glycosylation. Residues 704–724 form a helical membrane-spanning segment; it reads TILILVVVTAVLVLMAVYTLV. At 725–1091 the chain is on the cytoplasmic side; it reads RARAAGKQLL…CSFAFSDDSV (367 aa). Residues 760-1046 enclose the Protein kinase domain; sequence LTSANVIGTG…MLTEIRHIDV (287 aa). Residues 766-774 and Lys788 contribute to the ATP site; that span reads IGTGSSGVV. Phosphotyrosine occurs at positions 831 and 870. Asp883 (proton acceptor) is an active-site residue. Residue Tyr933 is modified to Phosphotyrosine.

It belongs to the protein kinase superfamily. Ser/Thr protein kinase family. In terms of assembly, binds to RGF peptides such as RGF1, GLV5/CLEL1/RGF2, GLV7/CLEL3/RGF3, GLV3/RGF4, GLV10/CLEL7/RGF5 and RGF10/CLELN; these interactions trigger the formation of heterodimers with SERK1, SERK2 or BAK1/SERK3 via LRR regions. Phosphorylated and ubiquitinated upon interaction with RGF1, thus leading to activation a subsequent degradation. In terms of processing, autophosphorylated. Expressed in roots.

The protein localises to the cell membrane. It catalyses the reaction L-seryl-[protein] + ATP = O-phospho-L-seryl-[protein] + ADP + H(+). It carries out the reaction L-threonyl-[protein] + ATP = O-phospho-L-threonyl-[protein] + ADP + H(+). Its function is as follows. Together with RGI1, RGI2, RGI4 and RGI5, acts as a receptor of RGF peptides (e.g. RGF1, GLV5/CLEL1/RGF2, GLV7/CLEL3/RGF3, GLV3/RGF4, GLV10/CLEL7/RGF5 and RGF10/CLELN), peptide hormones which maintain the postembryonic root stem cell niche by regulating the expression levels and patterns of the transcription factor PLETHORA (PLT, e.g. PLT1 and PLT2). Links RGF peptides signal with their downstream components. In Arabidopsis thaliana (Mouse-ear cress), this protein is LRR receptor-like serine/threonine-protein kinase RGI3.